The chain runs to 259 residues: Phospholipase YtpA (259 aa).

S88 serves as the catalytic Nucleophile. Active-site charge relay system residues include D206 and H236.

It belongs to the AB hydrolase superfamily.

It participates in antibiotic biosynthesis; bacilysocin biosynthesis. In terms of biological role, phospholipase involved in the biosynthesis of the antibiotic bacilysocin. It probably catalyzes the hydrolysis of the 2-sn-acyl moiety of phosphatidylglycerol to produce bacilysocin (lysophosphatidylglycerol). Is also able to catalyze the hydrolysis reaction of one acyl bond in phosphatidylcholine in vitro (actual cleavage point is unknown), resulting in lysophosphatidylcholine. The protein is Phospholipase YtpA (ytpA) of Bacillus subtilis (strain 168).